Reading from the N-terminus, the 223-residue chain is uncharacterized protein (223 aa).

Positions 11-71 (EATFESFIDA…YLLEKRQMKK (61 aa)) constitute an HTH tetR-type domain. The H-T-H motif DNA-binding region spans 34–53 (SVEDISRAAGYSKGAFYVHF).

This is an uncharacterized protein from Bacillus subtilis (strain 168).